The following is a 201-amino-acid chain: Ribosome maturation factor RimM (201 aa).

A PRC barrel domain is found at 92–166 (DEDEFYHADL…RVVVEPPANF (75 aa)). Positions 169–201 (PAGPQPAEGEEMPDGALEALEGEEAGAGTAPQP) are disordered.

This sequence belongs to the RimM family. Binds ribosomal protein uS19.

The protein resides in the cytoplasm. Its function is as follows. An accessory protein needed during the final step in the assembly of 30S ribosomal subunit, possibly for assembly of the head region. Essential for efficient processing of 16S rRNA. May be needed both before and after RbfA during the maturation of 16S rRNA. It has affinity for free ribosomal 30S subunits but not for 70S ribosomes. The polypeptide is Ribosome maturation factor RimM (Rhodospirillum centenum (strain ATCC 51521 / SW)).